Consider the following 302-residue polypeptide: Glycine N-acyltransferase-like protein 1 (302 aa).

It belongs to the glycine N-acyltransferase family. In terms of tissue distribution, expressed in liver and kidney and, at lower levels, in pancreas, testis, ovary and stomach.

It catalyses the reaction an acyl-CoA + L-glutamine = an N(2)-acyl-L-glutamine + CoA + H(+). Its function is as follows. Acyltransferase which transfers an acyl group to the N-terminus of glutamine. Can use phenylacetyl-CoA as an acyl donor. In Homo sapiens (Human), this protein is Glycine N-acyltransferase-like protein 1.